A 366-amino-acid polypeptide reads, in one-letter code: Galactoside alpha-(1,2)-fucosyltransferase 1 (366 aa).

At 1-8 the chain is on the cytoplasmic side; that stretch reads MWPLSHRH. Residues 9–25 form a helical; Signal-anchor for type II membrane protein membrane-spanning segment; that stretch reads LCLAFLLVCVLSAISFF. At 26–366 the chain is on the lumenal side; that stretch reads LHIHQDSIRH…LSPLWTLAEP (341 aa). Asn66, Asn302, and Asn328 each carry an N-linked (GlcNAc...) asparagine glycan.

It belongs to the glycosyltransferase 11 family.

It is found in the golgi apparatus. Its subcellular location is the golgi stack membrane. The catalysed reaction is a beta-D-galactosyl-(1-&gt;4)-N-acetyl-beta-D-glucosaminyl derivative + GDP-beta-L-fucose = an alpha-L-Fuc-(1-&gt;2)-beta-D-Gal-(1-&gt;4)-beta-D-GlcNAc derivative + GDP + H(+). It catalyses the reaction a ganglioside GA1 + GDP-beta-L-fucose = a ganglioside Fuc-GA1 + GDP + H(+). The enzyme catalyses a beta-D-Gal-(1-&gt;3)-beta-D-GlcNAc-(1-&gt;3)-beta-D-Gal-(1-&gt;4)-beta-D-Glc-(1&lt;-&gt;1')-Cer(d18:1(4E)) + GDP-beta-L-fucose = alpha-L-fucosyl-(1-&gt;2)- beta-D-galactosyl-(1-&gt;3)-N-acetyl-beta-D-glucosaminyl-(1-&gt;3)-beta-D-galactosyl-(1-&gt;4)-beta-D-glucosyl-(1&lt;-&gt;1')-N-acylsphing-4-enine + GDP + H(+). It carries out the reaction a neolactoside nLc4Cer(d18:1(4E)) + GDP-beta-L-fucose = a neolactoside IV(2)-alpha-Fuc-nLc4Cer(d18:1(4E)) + GDP + H(+). The catalysed reaction is a ganglioside GM1 + GDP-beta-L-fucose = a ganglioside Fuc-GM1 + GDP + H(+). It catalyses the reaction beta-D-galactosyl-(1-&gt;3)-N-acetyl-D-galactosamine + GDP-beta-L-fucose = alpha-L-fucosyl-(1-&gt;2)-beta-D-galactosyl-(1-&gt;3)-N-acetyl-D-galactosamine + GDP + H(+). Its pathway is protein modification; protein glycosylation. In terms of biological role, catalyzes the transfer of L-fucose, from a guanosine diphosphate-beta-L-fucose, to the terminal galactose residue of glycoconjugates through an alpha(1,2) linkage leading to H antigen synthesis that is an intermediate substrate in the synthesis of ABO blood group antigens. H antigen is essential for maturation of the glomerular layer of the main olfactory bulb, in cell migration and early cell-cell contacts during tumor associated angiogenesis. Preferentially fucosylates soluble lactose and to a lesser extent fucosylates glycolipids gangliosides GA1 and GM1a. The protein is Galactoside alpha-(1,2)-fucosyltransferase 1 of Aotus nancymaae (Ma's night monkey).